Here is a 117-residue protein sequence, read N- to C-terminus: Large ribosomal subunit protein bL19 (117 aa).

The protein belongs to the bacterial ribosomal protein bL19 family.

Functionally, this protein is located at the 30S-50S ribosomal subunit interface and may play a role in the structure and function of the aminoacyl-tRNA binding site. This Shewanella baltica (strain OS155 / ATCC BAA-1091) protein is Large ribosomal subunit protein bL19.